The primary structure comprises 797 residues: MENGGTRTQQIRQVLLLFVLLGMSQAGSETWSFSVAEEMQSGSFVGNLAKDLGLKVRELSSRGARVVSNDKKQRLQLDINTGDVLLSETLDREELCGSIEPCVLHFQVLMQNPTQFLQIELQVRDINDHSPIFLEKQMLLEIPENSPVGAVFLLESAKDLDVGINAVKSYTISPNSHFHIKMRVNPDNRKYPELVLDKALDYEELPELSFILTALDGGSPPRSGTALVRVVVVDINDNSPEFEQAFYEVKIPENSILGSLILTVSAWDLDSGTNGEICYTLSHASEDIRKTFEINQKSGDITLTAPLDFETIESYSIIIQATDRGGLFGKSTVRIQVIDVNDNAPEITVSSITSPIPENTPETVVMVFSIQDIDSGDNGRIVCSIPEDLPFVLKSSVENYYTLETERPLDRESTAEYNITITVTDLGIPRLKTEHNTTVLVSDVNDNAPTFTQTSYTLFVSENNSPALHIGSVSATDRDSGTNAQVNYSLLPPQDPHLPLASLVSINADNGHLFALRSLDYEALQAFEFRVGATDRGSPALSSEALVRVLVLDANDNSPFVLYPLQNGSAPCTELVPRAAEPGYLVTKVVAVDGDSGQNAWLSYQLLKATEPGLFXVWAHNGEVRTARLLSERDAAKHRLVVLVKDNGEPPRSATATLHVLLVDGFSQPFLPLPEAAPAQAQTDFLTVYLVVALASVSSLFFFSVLLFVAVRLCRRSRAASVGSCSVPKGPFPGHLVDVSGTGTLSQSYQYEVCLTGGSETNEFKFLKPVIPNIQAKGLGKNSEENSTFQNSFGFNF.

The first 26 residues, 1–26 (MENGGTRTQQIRQVLLLFVLLGMSQA), serve as a signal peptide directing secretion. Over 27-690 (GSETWSFSVA…AQTDFLTVYL (664 aa)) the chain is Extracellular. 5 consecutive Cadherin domains span residues 35 to 133 (VAEE…SPIF), 138 to 242 (MLLE…SPEF), 247 to 347 (YEVK…APEI), 352 to 451 (ITSP…APTF), and 456 to 561 (YTLF…SPFV). Asparagine 418, asparagine 436, asparagine 487, and asparagine 567 each carry an N-linked (GlcNAc...) asparagine glycan. Residues 568 to 671 (GSAPCTELVP…LVDGFSQPFL (104 aa)) enclose the Cadherin 6 domain. A helical membrane pass occupies residues 691–711 (VVALASVSSLFFFSVLLFVAV). Residues 712 to 797 (RLCRRSRAAS…TFQNSFGFNF (86 aa)) lie on the Cytoplasmic side of the membrane.

Its subcellular location is the cell membrane. Potential calcium-dependent cell-adhesion protein. May be involved in the establishment and maintenance of specific neuronal connections in the brain. The polypeptide is Protocadherin beta-11 (PCDHB11) (Pan troglodytes (Chimpanzee)).